The primary structure comprises 87 residues: MAHKKAGGSSRNGRDSQAQRLGVKRYGGQFVLAGNIIVRQRGTEFHPGDNVGCGKDHTLFALKDGVIQFSIKGLKKRRVVTIVPAAE.

The protein belongs to the bacterial ribosomal protein bL27 family.

The chain is Large ribosomal subunit protein bL27 from Dechloromonas aromatica (strain RCB).